We begin with the raw amino-acid sequence, 378 residues long: Succinyl-diaminopimelate desuccinylase (378 aa).

His67 contributes to the Zn(2+) binding site. Asp69 is a catalytic residue. Asp100 contributes to the Zn(2+) binding site. The Proton acceptor role is filled by Glu134. The Zn(2+) site is built by Glu135, Glu163, and His349.

This sequence belongs to the peptidase M20A family. DapE subfamily. As to quaternary structure, homodimer. Zn(2+) is required as a cofactor. Co(2+) serves as cofactor.

It catalyses the reaction N-succinyl-(2S,6S)-2,6-diaminopimelate + H2O = (2S,6S)-2,6-diaminopimelate + succinate. It functions in the pathway amino-acid biosynthesis; L-lysine biosynthesis via DAP pathway; LL-2,6-diaminopimelate from (S)-tetrahydrodipicolinate (succinylase route): step 3/3. Its function is as follows. Catalyzes the hydrolysis of N-succinyl-L,L-diaminopimelic acid (SDAP), forming succinate and LL-2,6-diaminopimelate (DAP), an intermediate involved in the bacterial biosynthesis of lysine and meso-diaminopimelic acid, an essential component of bacterial cell walls. The chain is Succinyl-diaminopimelate desuccinylase from Nitrosospira multiformis (strain ATCC 25196 / NCIMB 11849 / C 71).